Reading from the N-terminus, the 214-residue chain is MRIILLGAPGAGKGTQAQFIVEKYGIPQISTGDMLRSAVKAGTELGLKAKALMDHGKLVTDELVIALVKERIKQDDCRNGFLLDGFPRTIPQADAMKEAGINVDYVLEFDVPDELIIERIIGRRIHAPSGRVYHIKFNPPVVENKDDVTGEELTVRKDDHEDIVRKRLVEYHQQTAPLVSYYQKEAEADYTKYFGIDGTRKVSEISEELSKILD.

10–15 provides a ligand contact to ATP; it reads GAGKGT. Positions 30–59 are NMP; it reads STGDMLRSAVKAGTELGLKAKALMDHGKLV. AMP-binding positions include Thr-31, Arg-36, 57 to 59, 85 to 88, and Gln-92; these read KLV and GFPR. Positions 122 to 159 are LID; that stretch reads GRRIHAPSGRVYHIKFNPPVVENKDDVTGEELTVRKDD. ATP contacts are provided by residues Arg-123 and 132–133; that span reads VY. AMP is bound by residues Arg-156 and Arg-167. An ATP-binding site is contributed by Arg-200.

This sequence belongs to the adenylate kinase family. In terms of assembly, monomer.

It is found in the cytoplasm. It carries out the reaction AMP + ATP = 2 ADP. The protein operates within purine metabolism; AMP biosynthesis via salvage pathway; AMP from ADP: step 1/1. Catalyzes the reversible transfer of the terminal phosphate group between ATP and AMP. Plays an important role in cellular energy homeostasis and in adenine nucleotide metabolism. In Photorhabdus laumondii subsp. laumondii (strain DSM 15139 / CIP 105565 / TT01) (Photorhabdus luminescens subsp. laumondii), this protein is Adenylate kinase.